Reading from the N-terminus, the 118-residue chain is Holo-[acyl-carrier-protein] synthase (118 aa).

The Mg(2+) site is built by aspartate 8 and glutamate 58.

The protein belongs to the P-Pant transferase superfamily. AcpS family. The cofactor is Mg(2+).

It localises to the cytoplasm. The catalysed reaction is apo-[ACP] + CoA = holo-[ACP] + adenosine 3',5'-bisphosphate + H(+). Transfers the 4'-phosphopantetheine moiety from coenzyme A to a Ser of acyl-carrier-protein. The polypeptide is Holo-[acyl-carrier-protein] synthase (Streptococcus pyogenes serotype M5 (strain Manfredo)).